A 249-amino-acid chain; its full sequence is Glutathione S-transferase S1 (249 aa).

The segment covering 1 to 38 has biased composition (low complexity); that stretch reads MADEAQAPPAEGAPPAEGEAPPPAEGAEGAVEGGEAAP. Residues 1–42 are disordered; the sequence is MADEAQAPPAEGAPPAEGEAPPPAEGAEGAVEGGEAAPPAEP. Positions 48-125 constitute a GST N-terminal domain; it reads HSYTLFYFNV…FLAKTVGLCG (78 aa). Residues Y54, W85, K89, 96–97, and 109–110 each bind glutathione; these read QM and QS. The 123-residue stretch at 127 to 249 folds into the GST C-terminal domain; it reads TPWEDLQIDI…WIEKRPVTEV (123 aa).

The protein belongs to the GST superfamily. Sigma family. In terms of assembly, homodimer.

It carries out the reaction RX + glutathione = an S-substituted glutathione + a halide anion + H(+). In terms of biological role, conjugation of reduced glutathione to a wide number of exogenous and endogenous hydrophobic electrophiles. May be involved in the detoxification of metabolites produced during cellular division and morphogenesis. The protein is Glutathione S-transferase S1 of Drosophila melanogaster (Fruit fly).